The following is a 303-amino-acid chain: N-acetyl-D-glucosamine kinase (303 aa).

ATP is bound by residues 4–11 and 133–140; these read GFDIGGTK and GVGGGLVL. Residues His157, Cys177, Cys179, and Cys184 each contribute to the Zn(2+) site.

Belongs to the ROK (NagC/XylR) family. NagK subfamily.

The enzyme catalyses N-acetyl-D-glucosamine + ATP = N-acetyl-D-glucosamine 6-phosphate + ADP + H(+). It functions in the pathway cell wall biogenesis; peptidoglycan recycling. Catalyzes the phosphorylation of N-acetyl-D-glucosamine (GlcNAc) derived from cell-wall degradation, yielding GlcNAc-6-P. The sequence is that of N-acetyl-D-glucosamine kinase from Salmonella heidelberg (strain SL476).